The following is a 136-amino-acid chain: MLSPKRTRFRKQHRGRMKGKSCRGNHICFGRYALQVLEPAWITARQIEAGRRAMTRYARRGGKIWVRIFPDKPVTIRPTETRMGSGKGSPEYWVAVVKPGRILYEMSGVSETVARAAISIAASKMPIRSQFLRLEI.

This sequence belongs to the universal ribosomal protein uL16 family. In terms of assembly, part of the 50S ribosomal subunit.

It localises to the plastid. Its subcellular location is the chloroplast. This chain is Large ribosomal subunit protein uL16c, found in Zea mays (Maize).